The primary structure comprises 66 residues: Beta-defensin 107A (66 aa).

A signal peptide spans 1–22 (MKIFFFIFAALILLAQIFQART). Cystine bridges form between C37–C51 and C41–C60.

This sequence belongs to the beta-defensin family.

The protein resides in the secreted. Has antibacterial activity. This Macaca fascicularis (Crab-eating macaque) protein is Beta-defensin 107A (DEFB107A).